The chain runs to 1795 residues: Protein TIC 214 (1795 aa).

6 helical membrane-spanning segments follow: residues 19–39, 68–88, 91–111, 133–153, 176–196, and 227–247; these read IINS…FSIG, FIAG…HLAL, PHTI…WNNH, VFLN…SSML, VGWL…LVWI, and IFSI…PSPI. The tract at residues 1490–1517 is disordered; it reads EKESTGQVEFESDKEQQRNSESALSNQE. Positions 1508 to 1517 are enriched in polar residues; that stretch reads NSESALSNQE.

The protein belongs to the TIC214 family. As to quaternary structure, part of the Tic complex.

Its subcellular location is the plastid. It localises to the chloroplast inner membrane. Its function is as follows. Involved in protein precursor import into chloroplasts. May be part of an intermediate translocation complex acting as a protein-conducting channel at the inner envelope. In Crucihimalaya wallichii (Rock-cress), this protein is Protein TIC 214.